We begin with the raw amino-acid sequence, 96 residues long: Co-chaperonin GroES (96 aa).

The protein belongs to the GroES chaperonin family. As to quaternary structure, heptamer of 7 subunits arranged in a ring. Interacts with the chaperonin GroEL.

The protein resides in the cytoplasm. Together with the chaperonin GroEL, plays an essential role in assisting protein folding. The GroEL-GroES system forms a nano-cage that allows encapsulation of the non-native substrate proteins and provides a physical environment optimized to promote and accelerate protein folding. GroES binds to the apical surface of the GroEL ring, thereby capping the opening of the GroEL channel. This is Co-chaperonin GroES from Paracidovorax citrulli (strain AAC00-1) (Acidovorax citrulli).